A 382-amino-acid polypeptide reads, in one-letter code: Glutaminyl-peptide cyclotransferase-like protein (382 aa).

Residues 35–55 traverse the membrane as a helical segment; the sequence is LLPLLLALAVGSAFYTIWSGW. A disulfide bridge links Cys-167 with Cys-191. Asp-186 contacts Zn(2+). Glu-225 acts as the Proton acceptor in catalysis. Glu-226 contacts Zn(2+). Asp-269 (proton acceptor) is an active-site residue. His-351 is a Zn(2+) binding site.

The protein belongs to the glutaminyl-peptide cyclotransferase family.

The protein resides in the golgi apparatus membrane. It catalyses the reaction N-terminal L-glutaminyl-[peptide] = N-terminal 5-oxo-L-prolyl-[peptide] + NH4(+). In terms of biological role, responsible for the biosynthesis of pyroglutamyl peptides. The protein is Glutaminyl-peptide cyclotransferase-like protein (QPCTL) of Homo sapiens (Human).